Here is an 860-residue protein sequence, read N- to C-terminus: Protein argonaute-3 (860 aa).

Residues 230 to 349 (PVIQFMCEVL…LPLEVCNIVA (120 aa)) form the PAZ domain. Residues 518-819 (LIIVILPGKT…VAFRARYHLV (302 aa)) form the Piwi domain. Residues 530–567 (YAEVKRAGDTLLGMATQCVQVKNVIKTSPQTLSNLCLK) form an interaction with guide RNA region. Aspartate 598, glutamate 638, and aspartate 670 together coordinate a divalent metal cation. Residues 758-805 (QGTSRPSHYHVLWDDNCFTADELQLLTYQLCHTYVRCTRSVSIPAPAY) are interaction with guide RNA. Histidine 808 provides a ligand contact to a divalent metal cation.

Belongs to the argonaute family. Ago subfamily.

It localises to the cytoplasm. It is found in the P-body. The catalysed reaction is Endonucleolytic cleavage to 5'-phosphomonoester.. In terms of biological role, required for RNA-mediated gene silencing (RNAi). Binds to short RNAs such as microRNAs (miRNAs) and represses the translation of mRNAs which are complementary to them. Possesses RNA slicer activity but only on select RNAs bearing 5'- and 3'-flanking sequences to the region of guide-target complementarity. This Gallus gallus (Chicken) protein is Protein argonaute-3 (AGO3).